The sequence spans 403 residues: Large ribosomal subunit protein uL3 (403 aa).

Residues 1–37 (MSHRKFSAPRHGSLGFLPRKRSSRHRGKVKSFPKDDP) are disordered. Phosphoserine is present on Ser13. A compositionally biased stretch (basic residues) spans 18–31 (PRKRSSRHRGKVKS). Lys39 participates in a covalent cross-link: Glycyl lysine isopeptide (Lys-Gly) (interchain with G-Cter in SUMO2). The residue at position 136 (Lys136) is an N6-acetyllysine. Glycyl lysine isopeptide (Lys-Gly) (interchain with G-Cter in SUMO2) cross-links involve residues Lys224 and Lys226. A Tele-methylhistidine modification is found at His245. N6-acetyllysine; alternate occurs at positions 286 and 294. Lys286 is covalently cross-linked (Glycyl lysine isopeptide (Lys-Gly) (interchain with G-Cter in SUMO2); alternate). Lys294 participates in a covalent cross-link: Glycyl lysine isopeptide (Lys-Gly) (interchain with G-Cter in SUMO1); alternate. Residue Ser304 is modified to Phosphoserine. Residue Lys366 is modified to N6-acetyllysine; alternate. Lys366 is covalently cross-linked (Glycyl lysine isopeptide (Lys-Gly) (interchain with G-Cter in SUMO2); alternate). At Lys373 the chain carries N6-acetyllysine. Residues Lys386, Lys393, and Lys399 each participate in a glycyl lysine isopeptide (Lys-Gly) (interchain with G-Cter in SUMO2) cross-link.

This sequence belongs to the universal ribosomal protein uL3 family. As to quaternary structure, component of the large ribosomal subunit. Interacts with DHX33. Post-translationally, constitutively monomethylated at His-245 by METTL18. Methylation at His-245 regulates translation elongation by slowing ribosome traversal on tyrosine codons: slower elongation provides enough time for proper folding of synthesized proteins and prevents cellular aggregation of tyrosine-rich proteins It is not required for incorporation of RPL3 into ribosomes.

It localises to the nucleus. The protein resides in the nucleolus. It is found in the cytoplasm. Component of the large ribosomal subunit. The ribosome is a large ribonucleoprotein complex responsible for the synthesis of proteins in the cell. The protein is Large ribosomal subunit protein uL3 (RPL3) of Macaca fascicularis (Crab-eating macaque).